Reading from the N-terminus, the 860-residue chain is Leucine--tRNA ligase (860 aa).

The 'HIGH' region motif lies at 42 to 52 (PYPSGRLHMGH). Positions 619-623 (KMSKS) match the 'KMSKS' region motif. ATP is bound at residue Lys622.

It belongs to the class-I aminoacyl-tRNA synthetase family.

The protein resides in the cytoplasm. It carries out the reaction tRNA(Leu) + L-leucine + ATP = L-leucyl-tRNA(Leu) + AMP + diphosphate. This chain is Leucine--tRNA ligase, found in Erwinia tasmaniensis (strain DSM 17950 / CFBP 7177 / CIP 109463 / NCPPB 4357 / Et1/99).